A 294-amino-acid polypeptide reads, in one-letter code: tRNA dimethylallyltransferase (294 aa).

Gly10 to Thr17 lines the ATP pocket. Thr12–Thr17 contacts substrate. The tract at residues Asp35–Gln38 is interaction with substrate tRNA.

It belongs to the IPP transferase family. As to quaternary structure, monomer. Mg(2+) serves as cofactor.

It carries out the reaction adenosine(37) in tRNA + dimethylallyl diphosphate = N(6)-dimethylallyladenosine(37) in tRNA + diphosphate. Catalyzes the transfer of a dimethylallyl group onto the adenine at position 37 in tRNAs that read codons beginning with uridine, leading to the formation of N6-(dimethylallyl)adenosine (i(6)A). The sequence is that of tRNA dimethylallyltransferase from Streptococcus pneumoniae serotype 19F (strain G54).